The chain runs to 399 residues: UDP-N-acetylglucosamine--N-acetylmuramyl-(pentapeptide) pyrophosphoryl-undecaprenol N-acetylglucosamine transferase (399 aa).

The segment at 1-31 (MTSRFGHSQHPRRGRSARARAGRREGVQSNF) is disordered. Residues 7 to 21 (HSQHPRRGRSARARA) are compositionally biased toward basic residues. UDP-N-acetyl-alpha-D-glucosamine is bound by residues 58 to 60 (TGG), Asn-170, Arg-206, Ser-234, Ile-288, and Gln-333.

It belongs to the glycosyltransferase 28 family. MurG subfamily.

The protein resides in the cell inner membrane. It catalyses the reaction di-trans,octa-cis-undecaprenyl diphospho-N-acetyl-alpha-D-muramoyl-L-alanyl-D-glutamyl-meso-2,6-diaminopimeloyl-D-alanyl-D-alanine + UDP-N-acetyl-alpha-D-glucosamine = di-trans,octa-cis-undecaprenyl diphospho-[N-acetyl-alpha-D-glucosaminyl-(1-&gt;4)]-N-acetyl-alpha-D-muramoyl-L-alanyl-D-glutamyl-meso-2,6-diaminopimeloyl-D-alanyl-D-alanine + UDP + H(+). The protein operates within cell wall biogenesis; peptidoglycan biosynthesis. Cell wall formation. Catalyzes the transfer of a GlcNAc subunit on undecaprenyl-pyrophosphoryl-MurNAc-pentapeptide (lipid intermediate I) to form undecaprenyl-pyrophosphoryl-MurNAc-(pentapeptide)GlcNAc (lipid intermediate II). This chain is UDP-N-acetylglucosamine--N-acetylmuramyl-(pentapeptide) pyrophosphoryl-undecaprenol N-acetylglucosamine transferase, found in Acidovorax sp. (strain JS42).